A 126-amino-acid chain; its full sequence is Small ribosomal subunit protein bS6 (126 aa).

Residues 101-126 form a disordered region; the sequence is VMMKAKEERSAKREDAAPRAEEAAAE. Residues 104-126 are compositionally biased toward basic and acidic residues; sequence KAKEERSAKREDAAPRAEEAAAE.

The protein belongs to the bacterial ribosomal protein bS6 family.

Functionally, binds together with bS18 to 16S ribosomal RNA. The protein is Small ribosomal subunit protein bS6 of Aliivibrio fischeri (strain ATCC 700601 / ES114) (Vibrio fischeri).